Consider the following 341-residue polypeptide: Gibberellin 2-beta-dioxygenase 5 (341 aa).

A Fe2OG dioxygenase domain is found at Arg-187–Pro-290. Tyr-198 contacts 2-oxoglutarate. His-213, Asp-215, and His-271 together coordinate Fe cation. 2 residues coordinate 2-oxoglutarate: Arg-281 and Ser-283.

It belongs to the iron/ascorbate-dependent oxidoreductase family. GA2OX subfamily. It depends on L-ascorbate as a cofactor. Requires Fe(2+) as cofactor. Expressed in roots, leaves, culms, leaf sheaths and young panicles.

The protein localises to the cytoplasm. It is found in the nucleus. The enzyme catalyses gibberellin A1 + 2-oxoglutarate + O2 = gibberellin A8 + succinate + CO2. It participates in plant hormone biosynthesis; gibberellin biosynthesis. Catalyzes the 2-beta-hydroxylation of several biologically active gibberellins (GAs), leading to the homeostatic regulation of their endogenous level. Catabolism of GAs plays a central role in plant development. In vitro, converts GA12 and GA53 to the corresponding 2-beta-hydroxylated products GA110 and GA97, respectively. The protein is Gibberellin 2-beta-dioxygenase 5 of Oryza sativa subsp. japonica (Rice).